The following is a 200-amino-acid chain: ATP-dependent Clp protease proteolytic subunit 3 (200 aa).

The Nucleophile role is filled by S101. Residue H126 is part of the active site.

Belongs to the peptidase S14 family. As to quaternary structure, fourteen ClpP subunits assemble into 2 heptameric rings which stack back to back to give a disk-like structure with a central cavity, resembling the structure of eukaryotic proteasomes.

It is found in the cytoplasm. It carries out the reaction Hydrolysis of proteins to small peptides in the presence of ATP and magnesium. alpha-casein is the usual test substrate. In the absence of ATP, only oligopeptides shorter than five residues are hydrolyzed (such as succinyl-Leu-Tyr-|-NHMec, and Leu-Tyr-Leu-|-Tyr-Trp, in which cleavage of the -Tyr-|-Leu- and -Tyr-|-Trp bonds also occurs).. Cleaves peptides in various proteins in a process that requires ATP hydrolysis. Has a chymotrypsin-like activity. Plays a major role in the degradation of misfolded proteins. In Synechococcus sp. (strain CC9902), this protein is ATP-dependent Clp protease proteolytic subunit 3.